A 122-amino-acid chain; its full sequence is Cytochrome c-556 (122 aa).

Residues Met11, Cys111, Cys114, and His115 each coordinate heme. Residues Met11, Cys111, Cys114, and His115 each coordinate heme c.

As to quaternary structure, monomer. Post-translationally, binds 1 heme c group covalently per subunit.

Its function is as follows. Low-spin monoheme cytochrome c. The chain is Cytochrome c-556 from Agrobacterium tumefaciens (strain B2A).